The following is a 283-amino-acid chain: Myeloid differentiation primary response protein MyD88-B (283 aa).

The region spanning 27-105 is the Death domain; sequence RLCLYLNPNA…DILTDLAPLI (79 aa). Positions 106-143 are intermediate domain; the sequence is EADCKKYLEKKHGPLPLQDDNVDSSEQYRITKSDDPYG. The TIR domain occupies 147–281; it reads ETFDAFICCC…WFWDKLAKAL (135 aa).

The protein localises to the cytoplasm. Functionally, adapter protein involved in the Toll-like receptor and IL-1 receptor signaling pathway in the innate immune response. Activates expression of target genes in the Spemann organizer region during early embryonic development. Is required for normal axis formation. In Xenopus laevis (African clawed frog), this protein is Myeloid differentiation primary response protein MyD88-B (myd88-b).